Reading from the N-terminus, the 1893-residue chain is Serine-aspartate repeat-containing protein I (1893 aa).

A signal peptide spans 1–54 (MNFKGVKLLKNSKKRLDFLPNTLNKYSIRKFTVGTASILVGATLFLGVSNEAEA). Positions 53–333 (EAAEKIDSPT…AHGINNKNKQ (281 aa)) are disordered. The span at 54–222 (AAEKIDSPTK…AEEPATKEEA (169 aa)) shows a compositional bias: basic and acidic residues. Repeat copies occupy residues 72–83 (AATKEEAATTEE), 84–95 (PATKEEAATTEE), 96–107 (PATKEEAAIAEE), 108–119 (PATKEEAATTEE), 120–131 (PATKEEAAIAEE), 132–143 (PATKEEAATTEE), 144–155 (PATKEEAATTEE), 156–167 (PATKEEAAIAEE), 168–179 (PATKEEAATTEE), 180–191 (PATKEEAAIAEE), 192–203 (PATKEEAVTSEE), 204–215 (AATKEKAAIAEE), 216–227 (PATKEEAAIAEE), 228–239 (PETKEEAATTEE), 240–251 (PATKEEAAIAEE), 252–263 (AATKEKAVTSEE), 264–275 (AATKEKAAIAEE), 276–287 (AATKEKAAIAEE), 288–299 (PETKEEAATTEE), 300–311 (PETKEEAAIAEE), and 312–323 (PATKEKAVTSEE). The segment at 72–323 (AATKEEAATT…TKEKAVTSEE (252 aa)) is 21 X 12 AA tandem repeat of [AP]-[AE]-T-K-E-[EK]-A-[AV]-[IT]-[AST]-E-E. Residues 240-284 (PATKEEAAIAEEAATKEKAVTSEEAATKEKAAIAEEAATKEKAAI) show a composition bias toward basic and acidic residues. Residues 286–302 (EEPETKEEAATTEEPET) are compositionally biased toward acidic residues. Basic and acidic residues predominate over residues 312-325 (PATKEKAVTSEEAH). The ligand binding A region stretch occupies residues 324–755 (AHGINNKNKQ…GSSTAQGDNP (432 aa)). CNA-B domains lie at 756-874 (TYNL…YETP) and 875-984 (KYSL…YFDE). The segment at 941–1867 (KPEGLTQTTT…GNNTQNNGTL (927 aa)) is disordered. The span at 955–975 (DENKDADGEEVHVTITDHDDF) shows a compositional bias: basic and acidic residues. Positions 981–1836 (YFDEDSDADA…DSDADADADS (856 aa)) are enriched in acidic residues. Basic and acidic residues predominate over residues 1837–1851 (DADKYHNDTADKSND). An LPXTG sorting signal motif is present at residues 1854-1858 (LPDTG). Pentaglycyl murein peptidoglycan amidated threonine is present on T1857. The propeptide at 1858–1893 (GNNTQNNGTLFGSLFAALGGLFLVGSRRKNKNNEEK) is removed by sortase.

The protein belongs to the serine-aspartate repeat-containing protein (SDr) family.

The protein localises to the secreted. It is found in the cell wall. Its function is as follows. Responsible for collagen binding by S.saprophyticus. This chain is Serine-aspartate repeat-containing protein I (sdrI), found in Staphylococcus saprophyticus.